The following is a 353-amino-acid chain: tRNA N(3)-cytidine methyltransferase METTL2 (353 aa).

Residues M1–G37 are disordered. Residues W93, Y97, G165, D190, D216, and I237 each contribute to the S-adenosyl-L-methionine site.

The protein belongs to the methyltransferase superfamily. METL family. Monomer.

The protein resides in the cytoplasm. It catalyses the reaction cytidine(32) in tRNA(Thr) + S-adenosyl-L-methionine = N(3)-methylcytidine(32) in tRNA(Thr) + S-adenosyl-L-homocysteine + H(+). It carries out the reaction cytidine(32) in tRNA(Arg)(CCU) + S-adenosyl-L-methionine = N(3)-methylcytidine(32) in tRNA(Arg)(CCU) + S-adenosyl-L-homocysteine + H(+). S-adenosyl-L-methionine-dependent methyltransferase that mediates N(3)-methylcytidine modification of residue 32 of the tRNA anticodon loop of tRNA(Thr)(UGU) and tRNA(Arg)(CCU). N(3)-methylcytidine methylation by mettl2a requires the N6-threonylcarbamoylation of tRNA (t6A37) by the EKC/KEOPS complex as prerequisite. The polypeptide is tRNA N(3)-cytidine methyltransferase METTL2 (mettl2a) (Danio rerio (Zebrafish)).